Reading from the N-terminus, the 296-residue chain is Chondrolectin (296 aa).

An N-terminal signal peptide occupies residues 1–20 (MRATLRILCALTFLVSCSRG). Over 21–238 (ARVVSGQTVC…RLIIAGPSSM (218 aa)) the chain is Extracellular. Residues 38 to 187 (CYKIAYFKDV…CNMKHNFICK (150 aa)) enclose the C-type lectin domain. The segment covering 197 to 221 (VQSDRPGGHDVDLSTEDKEDRRTPP) has biased composition (basic and acidic residues). Positions 197-229 (VQSDRPGGHDVDLSTEDKEDRRTPPTDEDESPR) are disordered. The helical transmembrane segment at 239-266 (LLIYVIIPTIPLLLLILVASGTCCFQML) threads the bilayer. The Cytoplasmic portion of the chain corresponds to 267–296 (SKSKPRTKTSVNQSTLWISKTPKIDSGMEV).

As to expression, expressed in developing motor neurons.

It localises to the membrane. Functionally, plays a role in the development of the nervous system such as in neurite outgrowth and elongation. Involved in motor axon growth and guidance. Required for correct interactions of motor axons with the horizontal myoseptum. In Danio rerio (Zebrafish), this protein is Chondrolectin (chodl).